Reading from the N-terminus, the 216-residue chain is Transmembrane protein 163a (216 aa).

Residues 1-15 (MRLKPHEAQSYRKKA) lie on the Cytoplasmic side of the membrane. Residues 16–36 (LWVSWISIVVTLILAVAGFTV) form a helical membrane-spanning segment. Residues 37–43 (SFMRHSA) are Extracellular-facing. A helical membrane pass occupies residues 44-64 (SAFGFAFDATLDVLSSIIVLW). At 65-77 (RYSNAAAVHSAHR) the chain is on the cytoplasmic side. Residues 78-98 (EYIACVILGVIFILSSLCILG) form a helical membrane-spanning segment. The Extracellular portion of the chain corresponds to 99–114 (KAIHDLATKLLPEVDD). Residues 115–135 (FLFSVSIVSGLMCVILAVAKF) form a helical membrane-spanning segment. Residues 136-144 (MLGRILTSR) lie on the Cytoplasmic side of the membrane. Residues 145–165 (ALITDGFNSMVGGIMGFSILI) traverse the membrane as a helical segment. At 166–182 (SAEVFRHYPNVWYLDGT) the chain is on the extracellular side. Residues 183-203 (IGILIGLVIQAYGVKLLVDMI) traverse the membrane as a helical segment. Residues 204-216 (PRVRQTRNYERFE) are Cytoplasmic-facing.

It belongs to the TMEM163 family.

The protein localises to the cytoplasmic vesicle. It localises to the secretory vesicle. The protein resides in the synaptic vesicle membrane. It is found in the early endosome membrane. Its subcellular location is the late endosome membrane. The protein localises to the lysosome membrane. It localises to the cell membrane. It catalyses the reaction Zn(2+)(in) = Zn(2+)(out). In terms of biological role, zinc ion transporter that mediates zinc efflux and plays a crucial role in intracellular zinc homeostasis. Binds the divalent cations Zn(2+), Ni(2+), and to a minor extent Cu(2+). Is a functional modulator of P2X purinoceptors, including P2RX1, P2RX3, P2RX4 and P2RX7. Plays a role in central nervous system development and is required for myelination, and survival and proliferation of oligodendrocytes. The sequence is that of Transmembrane protein 163a from Danio rerio (Zebrafish).